The sequence spans 1642 residues: Cholesterol transporter ABCA5 (1642 aa).

A helical membrane pass occupies residues 32–52; it reads SVQEILFPLFFLFWLILISMM. N-linked (GlcNAc...) asparagine glycosylation occurs at asparagine 86. 6 consecutive transmembrane segments (helical) span residues 220-240, 264-284, 297-317, 328-348, 355-375, and 396-416; these read VILIYLVIAFSPFGYFLAIHI, LSWVLLYTSLIFLMSLLMAVI, IVIFLLFFLYGLSSVFFALML, GIVEFFVTVAFGFIGLMIILI, LVWLFSPFCHCTFVIGIAQVM, and LIITIIMLTLNSIFYVLLAVY. The N-linked (GlcNAc...) asparagine glycan is linked to asparagine 458. Residues 478-713 form the ABC transporter 1 domain; sequence IRISGIQKTY…WGIGYRLSMY (236 aa). 514-521 contacts ATP; the sequence is GHSGTGKS. The next 2 membrane-spanning stretches (helical) occupy residues 866–886 and 967–987; these read LLLLLIFFTVQIFMFLVHHSF and VFAAVFNSTMVYSLPILVNII. A glycan (N-linked (GlcNAc...) asparagine) is linked at asparagine 996. Transmembrane regions (helical) follow at residues 1021 to 1041, 1071 to 1091, 1102 to 1122, 1139 to 1159, 1169 to 1189, and 1207 to 1227; these read LYFQAALLGIIVTAMPPYFAM, VVDIPLFFIILILMLGSLLAF, FLAVVFCLIGYVPSVILFTYI, FIYSVAALACIAITEITFFMG, AFCIIIPIYPLLGCLISFIKI, and LSVAVISPYLQCVLWIFLLQY. The disordered stretch occupies residues 1249 to 1268; that stretch reads KSKNRKLPEPPDNEDEDEDV. Residues 1259-1268 show a composition bias toward acidic residues; sequence PDNEDEDEDV. The 244-residue stretch at 1290-1533 folds into the ABC transporter 2 domain; that stretch reads IMVSNLHKEY…FGKGYFLEIK (244 aa). 1333-1340 provides a ligand contact to ATP; the sequence is GPNGAGKS.

The protein belongs to the ABC transporter superfamily. ABCA family. Post-translationally, N-glycosylated. In terms of tissue distribution, ubiquitously expressed. Highly expressed in testis, skeletal muscle, kidney, liver and placenta. Expressed in both the epithelial and mesenchymal compartments, present within the outer root sheath (ORS) of the hair follicle as well as dermal sheath. Expressed in multiple regions of the brain, including the hippocampus, superior frontal and inferior temporal cortices. Strongly expressed in neurons and moderately in microglia, with only weak expression in astrocytes and oligodendrocytes.

It is found in the golgi apparatus membrane. It localises to the lysosome membrane. The protein localises to the late endosome membrane. The protein resides in the cell membrane. It catalyses the reaction cholesterol(in) + ATP + H2O = cholesterol(out) + ADP + phosphate + H(+). Functionally, cholesterol efflux transporter in macrophages that is responsible for APOAI/high-density lipoproteins (HDL) formation at the plasma membrane under high cholesterol levels and participates in reverse cholesterol transport. May play a role in the processing of autolysosomes. The protein is Cholesterol transporter ABCA5 of Homo sapiens (Human).